A 740-amino-acid chain; its full sequence is Catalase-peroxidase (740 aa).

The segment at residues Trp102 to Tyr229 is a cross-link (tryptophyl-tyrosyl-methioninium (Trp-Tyr) (with M-256)). Catalysis depends on His103, which acts as the Proton acceptor. The tract at residues Gly111–Trp130 is disordered. Positions Tyr229 to Met256 form a cross-link, tryptophyl-tyrosyl-methioninium (Tyr-Met) (with W-102). His271 lines the heme b pocket.

It belongs to the peroxidase family. Peroxidase/catalase subfamily. As to quaternary structure, homodimer or homotetramer. The cofactor is heme b. Formation of the three residue Trp-Tyr-Met cross-link is important for the catalase, but not the peroxidase activity of the enzyme.

It carries out the reaction H2O2 + AH2 = A + 2 H2O. It catalyses the reaction 2 H2O2 = O2 + 2 H2O. In terms of biological role, bifunctional enzyme with both catalase and broad-spectrum peroxidase activity. This is Catalase-peroxidase from Erythrobacter litoralis (strain HTCC2594).